The primary structure comprises 289 residues: Probable porphobilinogen deaminase (289 aa).

An S-(dipyrrolylmethanemethyl)cysteine modification is found at Cys233.

Belongs to the HMBS family. The cofactor is dipyrromethane.

It catalyses the reaction 4 porphobilinogen + H2O = hydroxymethylbilane + 4 NH4(+). The protein operates within porphyrin-containing compound metabolism; protoporphyrin-IX biosynthesis; coproporphyrinogen-III from 5-aminolevulinate: step 2/4. Tetrapolymerization of the monopyrrole PBG into the hydroxymethylbilane pre-uroporphyrinogen in several discrete steps. The chain is Probable porphobilinogen deaminase (hemC) from Methanothermobacter thermautotrophicus (strain ATCC 29096 / DSM 1053 / JCM 10044 / NBRC 100330 / Delta H) (Methanobacterium thermoautotrophicum).